We begin with the raw amino-acid sequence, 408 residues long: Cytochrome bc1 complex Rieske iron-sulfur subunit (408 aa).

Transmembrane regions (helical) follow at residues 56-76 (VGIW…TYIF), 98-118 (MLGI…VLYV), and 166-186 (LLAG…GGMI). The 98-residue stretch at 293–390 (HGPRNAVMLI…ITVDEEGYLI (98 aa)) folds into the Rieske domain. [2Fe-2S] cluster contacts are provided by Cys333, His335, Cys352, and His355. Cys338 and Cys354 form a disulfide bridge.

This sequence belongs to the Rieske iron-sulfur protein family. As to quaternary structure, the cytochrome bc1 complex is composed of a cytochrome b (QcrB), the Rieske iron-sulfur protein (QcrA) and a diheme cytochrome c (QcrC) subunit. The bc1 complex forms a supercomplex with cytochrome c oxidase (cytochrome aa3). The cofactor is [2Fe-2S] cluster.

The protein resides in the cell membrane. Its function is as follows. Iron-sulfur subunit of the cytochrome bc1 complex, an essential component of the respiratory electron transport chain required for ATP synthesis. The bc1 complex catalyzes the oxidation of menaquinol and the reduction of cytochrome c in the respiratory chain. The bc1 complex operates through a Q-cycle mechanism that couples electron transfer to generation of the proton gradient that drives ATP synthesis. In Corynebacterium efficiens (strain DSM 44549 / YS-314 / AJ 12310 / JCM 11189 / NBRC 100395), this protein is Cytochrome bc1 complex Rieske iron-sulfur subunit (qcrA).